The sequence spans 464 residues: Anthranilate synthase component 1 (464 aa).

L-tryptophan-binding positions include Ser-41 and 236 to 238 (PYM). 271–272 (GT) is a chorismate binding site. Glu-298 contacts Mg(2+). Chorismate contacts are provided by residues Tyr-386, Arg-406, 420–422 (GAG), and Gly-422. Residue Glu-435 coordinates Mg(2+).

Belongs to the anthranilate synthase component I family. Heterotetramer consisting of two non-identical subunits: a beta subunit (TrpG) and a large alpha subunit (TrpE). The cofactor is Mg(2+).

It catalyses the reaction chorismate + L-glutamine = anthranilate + pyruvate + L-glutamate + H(+). The protein operates within amino-acid biosynthesis; L-tryptophan biosynthesis; L-tryptophan from chorismate: step 1/5. With respect to regulation, feedback inhibited by tryptophan. In terms of biological role, part of a heterotetrameric complex that catalyzes the two-step biosynthesis of anthranilate, an intermediate in the biosynthesis of L-tryptophan. In the first step, the glutamine-binding beta subunit (TrpG) of anthranilate synthase (AS) provides the glutamine amidotransferase activity which generates ammonia as a substrate that, along with chorismate, is used in the second step, catalyzed by the large alpha subunit of AS (TrpE) to produce anthranilate. In the absence of TrpG, TrpE can synthesize anthranilate directly from chorismate and high concentrations of ammonia. This chain is Anthranilate synthase component 1 (trpE), found in Methanothermobacter thermautotrophicus (strain ATCC 29096 / DSM 1053 / JCM 10044 / NBRC 100330 / Delta H) (Methanobacterium thermoautotrophicum).